A 374-amino-acid polypeptide reads, in one-letter code: Type IV pilus assembly protein PilC (374 aa).

3 helical membrane passes run 138 to 158, 187 to 207, and 347 to 367; these read AMTY…ILLI, EFLQ…GFTF, and IMAV…LPIF.

It belongs to the GSP F family. Homotetramer. Interacts with PilB.

Its subcellular location is the cell inner membrane. Its function is as follows. Essential inner membrane component of the type IV pilus (T4P) that plays a role in surface and host cell adhesion, colonization, biofilm maturation, virulence, and twitching, a form of surface-associated motility facilitated by cycles of extension, adhesion, and retraction of T4P fibers. Controls both pilus assembly and disassembly and plays an important role in PilB localization to the complex and ATPase activity. The chain is Type IV pilus assembly protein PilC (pilC) from Pseudomonas aeruginosa (strain ATCC 15692 / DSM 22644 / CIP 104116 / JCM 14847 / LMG 12228 / 1C / PRS 101 / PAO1).